A 1793-amino-acid polypeptide reads, in one-letter code: Protein TIC 214 (1793 aa).

Helical transmembrane passes span 11 to 31 (LVSL…YYGF), 64 to 84 (FITG…HIAL), 90 to 112 (ITVI…NFLN), 129 to 149 (IFFQ…SSIL), 172 to 192 (VGWL…LVWI), and 222 to 242 (IFLI…PPIY). Residues 1504-1524 (DIEEDYGESDSKKGGKDKNKK) are disordered.

It belongs to the TIC214 family. As to quaternary structure, part of the Tic complex.

It is found in the plastid. The protein resides in the chloroplast inner membrane. Functionally, involved in protein precursor import into chloroplasts. May be part of an intermediate translocation complex acting as a protein-conducting channel at the inner envelope. This Lotus japonicus (Lotus corniculatus var. japonicus) protein is Protein TIC 214.